A 182-amino-acid polypeptide reads, in one-letter code: Orotate phosphoribosyltransferase (182 aa).

Residues Arg-91, Lys-92, Lys-95, His-97, and Glu-117–Ser-125 contribute to the 5-phospho-alpha-D-ribose 1-diphosphate site. Orotate-binding residues include Thr-121 and Arg-149.

It belongs to the purine/pyrimidine phosphoribosyltransferase family. PyrE subfamily. In terms of assembly, homodimer. Mg(2+) is required as a cofactor.

The catalysed reaction is orotidine 5'-phosphate + diphosphate = orotate + 5-phospho-alpha-D-ribose 1-diphosphate. It functions in the pathway pyrimidine metabolism; UMP biosynthesis via de novo pathway; UMP from orotate: step 1/2. Its function is as follows. Catalyzes the transfer of a ribosyl phosphate group from 5-phosphoribose 1-diphosphate to orotate, leading to the formation of orotidine monophosphate (OMP). This Pyrococcus furiosus (strain ATCC 43587 / DSM 3638 / JCM 8422 / Vc1) protein is Orotate phosphoribosyltransferase.